The sequence spans 772 residues: NAD(P)H-quinone oxidoreductase subunit 5, chloroplastic (772 aa).

A run of 15 helical transmembrane segments spans residues 8–28 (IWIV…GLFF), 39–59 (ICAI…FSIF), 87–107 (FLID…GILV), 120–140 (GYVR…GLVL), 147–167 (IYIF…FWFS), 185–205 (GDFG…SFDI), 219–239 (NGVN…GPAA), 258–278 (TPIS…FFVA), 291–311 (MNII…IALA), 395–415 (GTTF…ACFW), 425–445 (WIAS…TGFY), 574–594 (LFSL…GVPF), 631–651 (IPSV…YGPV), 710–730 (WIID…GEGM), and 738–758 (IPSY…ILII).

Belongs to the complex I subunit 5 family. As to quaternary structure, NDH is composed of at least 16 different subunits, 5 of which are encoded in the nucleus.

It is found in the plastid. It localises to the chloroplast thylakoid membrane. It catalyses the reaction a plastoquinone + NADH + (n+1) H(+)(in) = a plastoquinol + NAD(+) + n H(+)(out). The catalysed reaction is a plastoquinone + NADPH + (n+1) H(+)(in) = a plastoquinol + NADP(+) + n H(+)(out). In terms of biological role, NDH shuttles electrons from NAD(P)H:plastoquinone, via FMN and iron-sulfur (Fe-S) centers, to quinones in the photosynthetic chain and possibly in a chloroplast respiratory chain. The immediate electron acceptor for the enzyme in this species is believed to be plastoquinone. Couples the redox reaction to proton translocation, and thus conserves the redox energy in a proton gradient. This is NAD(P)H-quinone oxidoreductase subunit 5, chloroplastic (ndhF) from Angiopteris evecta (Mule's foot fern).